A 49-amino-acid polypeptide reads, in one-letter code: Large ribosomal subunit protein bL33A (49 aa).

The protein belongs to the bacterial ribosomal protein bL33 family.

In Latilactobacillus sakei subsp. sakei (strain 23K) (Lactobacillus sakei subsp. sakei), this protein is Large ribosomal subunit protein bL33A.